The following is a 512-amino-acid chain: Oryzalexin E synthase (512 aa).

Residues 6-26 (SELWMTAVATCMSLLLYLTIL) form a helical membrane-spanning segment. Residue cysteine 452 coordinates heme.

It belongs to the cytochrome P450 family. Heme is required as a cofactor.

It localises to the membrane. The catalysed reaction is ent-sandaracopimaradien-3beta-ol + reduced [NADPH--hemoprotein reductase] + O2 = oryzalexin E + oxidized [NADPH--hemoprotein reductase] + H2O + H(+). Its function is as follows. Enzyme of the diterpenoid metabolism involved in the biosynthesis of the oryzalexin class of phytoalexins. Can use ent-sandaracopimaradien and syn-stemodene as substrates, but no activity with syn-stemoden-19-oic acid. Hydroxylates 3-alpha-hydroxy-ent-sandaracopimaradiene at C-9-beta, resulting in a 3-alpha,9-beta-diol corresponding to oryzalexins E. The protein is Oryzalexin E synthase of Oryza sativa subsp. japonica (Rice).